The chain runs to 317 residues: 17-beta-hydroxysteroid dehydrogenase type 6 (317 aa).

The first 17 residues, 1–17 (MWLYLAVLLGLYYLLRW), serve as a signal peptide directing secretion. 33-57 (FITGCDSGFGNQLARQLDLRGLRVL) serves as a coordination point for NAD(+). Asn71 and Asn161 each carry an N-linked (GlcNAc...) asparagine glycan. Ser164 is a substrate binding site. The active-site Proton acceptor is Tyr176.

This sequence belongs to the short-chain dehydrogenases/reductases (SDR) family.

Its subcellular location is the microsome membrane. It is found in the endoplasmic reticulum membrane. The catalysed reaction is all-trans-retinol--[retinol-binding protein] + NAD(+) = all-trans-retinal--[retinol-binding protein] + NADH + H(+). It carries out the reaction all-trans-retinol + NAD(+) = all-trans-retinal + NADH + H(+). The enzyme catalyses androsterone + NAD(+) = 5alpha-androstan-3,17-dione + NADH + H(+). It catalyses the reaction testosterone + NAD(+) = androst-4-ene-3,17-dione + NADH + H(+). The catalysed reaction is 5alpha-androstane-3alpha,17beta-diol + NAD(+) = 17beta-hydroxy-5alpha-androstan-3-one + NADH + H(+). It carries out the reaction 17beta-estradiol + NAD(+) = estrone + NADH + H(+). The enzyme catalyses 17beta-estradiol + NADP(+) = estrone + NADPH + H(+). It catalyses the reaction 3alpha-hydroxy-5alpha-pregnan-20-one + NAD(+) = 5alpha-pregnane-3,20-dione + NADH + H(+). The catalysed reaction is 5alpha-androstane-3beta,17beta-diol + NAD(+) = 17beta-hydroxy-5alpha-androstan-3-one + NADH + H(+). It carries out the reaction 3beta-hydroxy-5alpha-androstan-17-one + NAD(+) = 5alpha-androstan-3,17-dione + NADH + H(+). Its function is as follows. NAD-dependent oxidoreductase with broad substrate specificity that shows both oxidative and reductive activity (in vitro). Has 17-beta-hydroxysteroid dehydrogenase activity towards various steroids (in vitro). Converts 5-alpha-androstan-3-alpha,17-beta-diol to androsterone and estradiol to estrone (in vitro). Has 3-alpha-hydroxysteroid dehydrogenase activity towards androsterone (in vitro). Has retinol dehydrogenase activity towards all-trans-retinol (in vitro). Can convert androsterone to epi-androsterone. Androsterone is first oxidized to 5-alpha-androstane-3,17-dione and then reduced to epi-andosterone. Can act on both C-19 and C-21 3-alpha-hydroxysteroids. The sequence is that of 17-beta-hydroxysteroid dehydrogenase type 6 (HSD17B6) from Bos taurus (Bovine).